A 361-amino-acid chain; its full sequence is 3-dehydroquinate synthase (361 aa).

It belongs to the archaeal-type DHQ synthase family.

The catalysed reaction is 2-amino-2,3,7-trideoxy-D-lyxo-hept-6-ulosonate + NAD(+) + H2O = 3-dehydroquinate + NH4(+) + NADH + H(+). Functionally, catalyzes the oxidative deamination and cyclization of 2-amino-3,7-dideoxy-D-threo-hept-6-ulosonic acid (ADH) to yield 3-dehydroquinate (DHQ), which is fed into the canonical shikimic pathway of aromatic amino acid biosynthesis. This Methanococcus maripaludis (strain C7 / ATCC BAA-1331) protein is 3-dehydroquinate synthase.